The following is a 92-amino-acid chain: Small ribosomal subunit protein uS19 (92 aa).

Belongs to the universal ribosomal protein uS19 family.

In terms of biological role, protein S19 forms a complex with S13 that binds strongly to the 16S ribosomal RNA. This is Small ribosomal subunit protein uS19 from Staphylococcus carnosus (strain TM300).